The following is a 94-amino-acid chain: Small ribosomal subunit protein uS19c (94 aa).

It belongs to the universal ribosomal protein uS19 family.

Its subcellular location is the plastid. The protein resides in the chloroplast. Its function is as follows. Protein S19 forms a complex with S13 that binds strongly to the 16S ribosomal RNA. The sequence is that of Small ribosomal subunit protein uS19c from Pleurastrum terricola (Filamentous green alga).